The sequence spans 459 residues: uncharacterized protein (459 aa).

The 59-residue stretch at 9-67 folds into the TRAM domain; that stretch reads KLEVGQTFPVTIKRLGINGEGVGYFKRQVVFIPGALPGEEVVAETTKIQRGFAEAKVKK. Cys-80, Cys-86, Cys-89, and Cys-168 together coordinate [4Fe-4S] cluster. S-adenosyl-L-methionine is bound by residues Gln-292, Tyr-321, Asp-342, and Asp-390. Cys-417 functions as the Nucleophile in the catalytic mechanism.

This sequence belongs to the class I-like SAM-binding methyltransferase superfamily. RNA M5U methyltransferase family.

This is an uncharacterized protein from Bacillus cereus (strain ATCC 10987 / NRS 248).